The chain runs to 252 residues: Small ribosomal subunit protein eS1 (252 aa).

Belongs to the eukaryotic ribosomal protein eS1 family. In terms of assembly, component of the small ribosomal subunit. Mature ribosomes consist of a small (40S) and a large (60S) subunit. The 40S subunit contains about 33 different proteins and 1 molecule of RNA (18S). The 60S subunit contains about 49 different proteins and 3 molecules of RNA (25S, 5.8S and 5S).

The protein localises to the cytoplasm. The sequence is that of Small ribosomal subunit protein eS1 from Enterocytozoon bieneusi (strain H348) (Microsporidian parasite).